The primary structure comprises 216 residues: Ribonuclease T (216 aa).

Residues 28 to 202 form the Exonuclease domain; it reads VVVDVETGGF…YDTEQTARLF (175 aa). Residues aspartate 31, glutamate 33, histidine 189, and aspartate 194 each coordinate Mg(2+). Histidine 189 serves as the catalytic Proton donor/acceptor.

The protein belongs to the RNase T family. Homodimer. The cofactor is Mg(2+).

In terms of biological role, trims short 3' overhangs of a variety of RNA species, leaving a one or two nucleotide 3' overhang. Responsible for the end-turnover of tRNA: specifically removes the terminal AMP residue from uncharged tRNA (tRNA-C-C-A). Also appears to be involved in tRNA biosynthesis. This is Ribonuclease T from Xanthomonas campestris pv. campestris (strain 8004).